The following is a 102-amino-acid chain: Large ribosomal subunit protein bL21 (102 aa).

Positions R79 to P91 are enriched in basic residues. Positions R79–A102 are disordered.

The protein belongs to the bacterial ribosomal protein bL21 family. As to quaternary structure, part of the 50S ribosomal subunit. Contacts protein L20.

Its function is as follows. This protein binds to 23S rRNA in the presence of protein L20. The protein is Large ribosomal subunit protein bL21 of Staphylococcus carnosus (strain TM300).